The primary structure comprises 604 residues: Ras guanine nucleotide exchange factor H (604 aa).

Residues 1-26 (MSNTNINVQSSTPKKSLGSSQYSLAG) are compositionally biased toward polar residues. A disordered region spans residues 1 to 61 (MSNTNINVQS…QENSIDDSGS (61 aa)). Low complexity predominate over residues 27–49 (SSSSNLNNINNNNNNNNNNNNNS). Positions 50–61 (TGQENSIDDSGS) are enriched in polar residues. In terms of domain architecture, LisH spans 115–147 (NDTMLLKLIMQYFHEENLTTSLKKIQEETKVQF). The region spanning 221-335 (PDGTIKAATF…AVINLKIENY (115 aa)) is the N-terminal Ras-GEF domain. In terms of domain architecture, Ras-GEF spans 365–591 (DEEEIARQLC…EQPQLTLDLS (227 aa)).

As to quaternary structure, component of the Sca1 complex composed of at least gefA, gefH, scaA, phr, and the protein phosphatase 2A subunits pppA and pho2B. Interacts directly with gefA and phr.

The protein resides in the cell membrane. Its function is as follows. Promotes the exchange of Ras-bound GDP by GTP. Component of the Sca1 complex, a regulator of cell motility, chemotaxis and signal relay. The Sca1 complex is recruited to the plasma membrane in a chemoattractant- and F-actin-dependent manner and is enriched at the leading edge of chemotaxing cells where it regulates F-actin dynamics and signal relay by controlling the activation of rasC and the downstream target of rapamycin complex 2 (TORC2)-Akt/protein kinase B (PKB) pathway. This is Ras guanine nucleotide exchange factor H (gefH) from Dictyostelium discoideum (Social amoeba).